Here is a 94-residue protein sequence, read N- to C-terminus: Co-chaperonin GroES (94 aa).

This sequence belongs to the GroES chaperonin family. Heptamer of 7 subunits arranged in a ring. Interacts with the chaperonin GroEL.

It localises to the cytoplasm. In terms of biological role, together with the chaperonin GroEL, plays an essential role in assisting protein folding. The GroEL-GroES system forms a nano-cage that allows encapsulation of the non-native substrate proteins and provides a physical environment optimized to promote and accelerate protein folding. GroES binds to the apical surface of the GroEL ring, thereby capping the opening of the GroEL channel. The polypeptide is Co-chaperonin GroES (Staphylococcus epidermidis (strain ATCC 35984 / DSM 28319 / BCRC 17069 / CCUG 31568 / BM 3577 / RP62A)).